Consider the following 461-residue polypeptide: Transforming growth factor beta-1-induced transcript 1 protein (461 aa).

Methionine 1 carries the N-acetylmethionine modification. Residues 1 to 86 (MEDLDALLSD…PPFSSSSGVL (86 aa)) are disordered. Residues 1-200 (MEDLDALLSD…GCPSPPGQTN (200 aa)) are transcription activation. An interaction with PTK2B/PYK2 region spans residues 1-240 (MEDLDALLSD…CNKPIAGQVV (240 aa)). The LD motif 1 motif lies at 3–15 (DLDALLSDLETTT). Threonine 33 carries the phosphothreonine modification. Tyrosine 38 is modified (phosphotyrosine). Over residues 41 to 52 (QPQTGSGESSGA) the composition is skewed to polar residues. A Phosphotyrosine; by FAK2 and FYN modification is found at tyrosine 60. At serine 68 the chain carries Phosphoserine. A compositionally biased stretch (low complexity) spans 69–83 (PKSVAPVAPPFSSSS). Positions 83–136 (SGVLGNGLCELDRLLQELNATQFNITDEIMSQFPSSKMAEGEGKEDQSEDKSIT) are interaction with PTK2/FAK1. Positions 92-104 (ELDRLLQELNATQ) match the LD motif 2 motif. Residues 116 to 154 (PSSKMAEGEGKEDQSEDKSITTVPSSTFPAPSKPSATSA) form a disordered region. Positions 121–134 (AEGEGKEDQSEDKS) are enriched in basic and acidic residues. The segment covering 135-154 (ITTVPSSTFPAPSKPSATSA) has biased composition (polar residues). 4 positions are modified to phosphoserine: serine 140, serine 141, serine 164, and serine 186. The LD motif 3 signature appears at 157–168 (ELDRLMASLSDF). The interval 171 to 204 (QNHLPASGPPQPPAVSPTREGCPSPPGQTNKGSL) is disordered. Phosphothreonine is present on threonine 188. At serine 194 the chain carries Phosphoserine. An LD motif 4 motif is present at residues 203 to 215 (SLDTMLGLLQSDL). 4 LIM zinc-binding domains span residues 226–285 (GLCG…RFSP), 286–343 (RCGF…QLFA), 344–403 (PRCQ…QRGS), and 404–461 (LCAT…KLFG). Serine 403 is modified (phosphoserine). Threonine 407 carries the phosphothreonine modification.

The protein belongs to the paxillin family. In terms of assembly, homooligomer. Interacts with PPARG. Interacts with TRAF4. Interacts with CRIP2. Interacts with HSPB1. Interacts with ILK. Interacts with LIMS1 and LIMS2. Interacts with NCK2. Interacts with NUDT16L1. Interacts with PAK. Interacts with PTPN12. Interacts with TCF3. Interacts with TCF7L2. Interacts with VCL. Interacts (via LD motif 3) with GIT1. Also interacts with GIT2. Forms a complex with ARHGEF7. Interacts with AR/androgen receptor in a ligand-dependent manner. Interacts with CSK. Interacts with PTK2/FAK1 and PTK2B/PYK2. Interacts with SLC6A3 and SLC6A4. Interacts with NR3C1. Interacts with SMAD3. Interacts with MAPK15. Interacts with SRC. Interacts with LYN. Interacts with talin. Interacts (via LIM zinc-binding domain 2) with CBLC (via RING-type zinc finger); the interaction is direct and enhances CBLC E3 ubiquitin-protein ligase activity. Interacts with PARVA. Interacts with PXN. Phosphorylated by gonadotropin-releasing hormone-activated SRC. In terms of tissue distribution, strongly expressed in large intestine, lung, spleen, testis, uterus and to a lower extent in brain, kidney and liver (at protein level). In brain, expressed by neuronal and non neuronal cells (at protein level).

Its subcellular location is the cell junction. The protein resides in the focal adhesion. It is found in the nucleus matrix. It localises to the cytoplasm. The protein localises to the cytoskeleton. In terms of biological role, functions as a molecular adapter coordinating multiple protein-protein interactions at the focal adhesion complex and in the nucleus. Links various intracellular signaling modules to plasma membrane receptors and regulates the Wnt and TGFB signaling pathways. May also regulate SLC6A3 and SLC6A4 targeting to the plasma membrane hence regulating their activity. In the nucleus, functions as a nuclear receptor coactivator regulating glucocorticoid, androgen, mineralocorticoid and progesterone receptor transcriptional activity. May play a role in the processes of cell growth, proliferation, migration, differentiation and senescence. May have a zinc-dependent DNA-binding activity. The sequence is that of Transforming growth factor beta-1-induced transcript 1 protein (Tgfb1i1) from Rattus norvegicus (Rat).